Reading from the N-terminus, the 228-residue chain is Small ribosomal subunit protein uS3 (228 aa).

The KH type-2 domain occupies 39–107; that stretch reads VREYLQDKLK…PVHINIEEIR (69 aa).

It belongs to the universal ribosomal protein uS3 family. Part of the 30S ribosomal subunit. Forms a tight complex with proteins S10 and S14.

Binds the lower part of the 30S subunit head. Binds mRNA in the 70S ribosome, positioning it for translation. The sequence is that of Small ribosomal subunit protein uS3 from Pseudomonas syringae pv. syringae (strain B728a).